A 374-amino-acid chain; its full sequence is MLGIARRRLGSGCALGQLMQALRPAAAAAAARTYSAAAKEMTVREALNSALDEEMSADPSVFLMGEEVGEYQGAYKISKGLLDKYGPDRVLDTPITEAGFTGIGVGAAYQGLRPVVEFMTFNFSMQAIDHIINSAAKSNYMSAGQINVPIVFRGPNGAAAGVGAQHSQCYAAWYAHVPGLKVLTPYSAEDARGLLKAAIRDPDPVVFLENELLYGESFPVSAEVLDSSFCLPIGKAKIEQEGKDVTITAFSKMVGYALQAAEILSKEGISAEVINLRSIRPLDRATINASVRKTNRLVTLEEGFPQHGVGAEICMSVVEDSFEYLDAPVERIAGADVPMPYAANLERMAVPQVEDIVRAAKRACYRAVPMAATA.

The transit peptide at 1–34 directs the protein to the mitochondrion; the sequence is MLGIARRRLGSGCALGQLMQALRPAAAAAAARTY. Glu-97 serves as a coordination point for thiamine diphosphate. 4 residues coordinate K(+): Ile-150, Ala-198, Ile-199, and Asp-201.

In terms of assembly, tetramer of 2 alpha and 2 beta subunits. The cofactor is thiamine diphosphate.

Its subcellular location is the mitochondrion matrix. It catalyses the reaction N(6)-[(R)-lipoyl]-L-lysyl-[protein] + pyruvate + H(+) = N(6)-[(R)-S(8)-acetyldihydrolipoyl]-L-lysyl-[protein] + CO2. In terms of biological role, the pyruvate dehydrogenase complex catalyzes the overall conversion of pyruvate to acetyl-CoA and CO(2). It contains multiple copies of three enzymatic components: pyruvate dehydrogenase (E1), dihydrolipoamide acetyltransferase (E2) and lipoamide dehydrogenase (E3). The protein is Pyruvate dehydrogenase E1 component subunit beta-1, mitochondrial of Oryza sativa subsp. japonica (Rice).